Consider the following 26-residue polypeptide: Toxin b subunit alpha (26 aa).

Toxin b is a heterodimer composed of toxin alpha and toxin beta. Expressed by the venom gland.

Its subcellular location is the secreted. Functionally, binds to sodium channels (Nav) and affects the channel activation process. This is Toxin b subunit alpha from Androctonus crassicauda (Arabian fat-tailed scorpion).